Here is a 210-residue protein sequence, read N- to C-terminus: Glutathione S-transferase P (210 aa).

In terms of domain architecture, GST N-terminal spans 2–81 (PPYTIVYFPV…HLGRTLGLYG (80 aa)). Position 4 is a phosphotyrosine; by EGFR (Y4). Glutathione-binding positions include Y8, R14, W39, K45, and 52 to 53 (QL). T62 bears the Phosphothreonine mark. 65 to 66 (QS) provides a ligand contact to glutathione. The 122-residue stretch at 83–204 (DQQEAALVDM…ASPEHMNRPI (122 aa)) folds into the GST C-terminal domain. An N6-succinyllysine mark is found at K103 and K116. The residue at position 128 (K128) is an N6-acetyllysine.

Belongs to the GST superfamily. Pi family. In terms of assembly, homodimer. Interacts with CDK5.

Its subcellular location is the cytoplasm. It localises to the mitochondrion. It is found in the nucleus. It catalyses the reaction RX + glutathione = an S-substituted glutathione + a halide anion + H(+). The catalysed reaction is prostaglandin J2 + glutathione = prostaglandin J2-S-(R)-glutathione. The enzyme catalyses prostaglandin J2 + glutathione = prostaglandin J2-S-(S)-glutathione. It carries out the reaction prostaglandin A2 + glutathione = prostaglandin A2-S-(S)-glutathione. It catalyses the reaction 11(S)-hydroxy-14(S),15(S)-epoxy-(5Z,8Z,12E)-eicosatrienoate + glutathione = (11S,15S)-dihydroxy-14(R)-S-glutathionyl-(5Z,8Z,12E)-eicosatrienoate. Functionally, conjugation of reduced glutathione to a wide number of exogenous and endogenous hydrophobic electrophiles. Involved in the formation of glutathione conjugates of both prostaglandin A2 (PGA2) and prostaglandin J2 (PGJ2). Participates in the formation of novel hepoxilin regioisomers. Negatively regulates CDK5 activity via p25/p35 translocation to prevent neurodegeneration. This is Glutathione S-transferase P (GSTP1) from Bos taurus (Bovine).